A 348-amino-acid chain; its full sequence is Holliday junction branch migration complex subunit RuvB (348 aa).

Positions 1–183 are large ATPase domain (RuvB-L); it reads MTEASRIVAP…FGIPVRLNFY (183 aa). ATP-binding positions include Leu22, Arg23, Gly64, Lys67, Thr68, Thr69, 130 to 132, Arg173, Tyr183, and Arg220; that span reads EDF. Thr68 contacts Mg(2+). The small ATPAse domain (RuvB-S) stretch occupies residues 184 to 254; that stretch reads TEDELEKIVS…VADHALGALE (71 aa). The tract at residues 257–348 is head domain (RuvB-H); the sequence is AAGLDAMDRR…SGLFGQDEDR (92 aa). Positions 293, 312, and 317 each coordinate DNA. The disordered stretch occupies residues 329 to 348; sequence LTEPSRDPAQSGLFGQDEDR.

The protein belongs to the RuvB family. As to quaternary structure, homohexamer. Forms an RuvA(8)-RuvB(12)-Holliday junction (HJ) complex. HJ DNA is sandwiched between 2 RuvA tetramers; dsDNA enters through RuvA and exits via RuvB. An RuvB hexamer assembles on each DNA strand where it exits the tetramer. Each RuvB hexamer is contacted by two RuvA subunits (via domain III) on 2 adjacent RuvB subunits; this complex drives branch migration. In the full resolvosome a probable DNA-RuvA(4)-RuvB(12)-RuvC(2) complex forms which resolves the HJ.

It is found in the cytoplasm. It catalyses the reaction ATP + H2O = ADP + phosphate + H(+). Its function is as follows. The RuvA-RuvB-RuvC complex processes Holliday junction (HJ) DNA during genetic recombination and DNA repair, while the RuvA-RuvB complex plays an important role in the rescue of blocked DNA replication forks via replication fork reversal (RFR). RuvA specifically binds to HJ cruciform DNA, conferring on it an open structure. The RuvB hexamer acts as an ATP-dependent pump, pulling dsDNA into and through the RuvAB complex. RuvB forms 2 homohexamers on either side of HJ DNA bound by 1 or 2 RuvA tetramers; 4 subunits per hexamer contact DNA at a time. Coordinated motions by a converter formed by DNA-disengaged RuvB subunits stimulates ATP hydrolysis and nucleotide exchange. Immobilization of the converter enables RuvB to convert the ATP-contained energy into a lever motion, pulling 2 nucleotides of DNA out of the RuvA tetramer per ATP hydrolyzed, thus driving DNA branch migration. The RuvB motors rotate together with the DNA substrate, which together with the progressing nucleotide cycle form the mechanistic basis for DNA recombination by continuous HJ branch migration. Branch migration allows RuvC to scan DNA until it finds its consensus sequence, where it cleaves and resolves cruciform DNA. The sequence is that of Holliday junction branch migration complex subunit RuvB from Nitrobacter winogradskyi (strain ATCC 25391 / DSM 10237 / CIP 104748 / NCIMB 11846 / Nb-255).